The sequence spans 103 residues: Small ribosomal subunit protein uS10 (103 aa).

Belongs to the universal ribosomal protein uS10 family. In terms of assembly, part of the 30S ribosomal subunit.

Its function is as follows. Involved in the binding of tRNA to the ribosomes. This is Small ribosomal subunit protein uS10 from Alteromonas mediterranea (strain DSM 17117 / CIP 110805 / LMG 28347 / Deep ecotype).